Consider the following 110-residue polypeptide: U1-lycotoxin-Ls1mm (110 aa).

An N-terminal signal peptide occupies residues 1 to 20; sequence MKFVLLFGVLLVTLFSYSSA. Residues 21 to 44 constitute a propeptide that is removed on maturation; the sequence is EMLDDFDQADEDELLSLIEKEEAR. Cystine bridges form between cysteine 47–cysteine 62, cysteine 54–cysteine 71, cysteine 61–cysteine 89, and cysteine 73–cysteine 87.

It belongs to the neurotoxin 19 (CSTX) family. 03 subfamily. As to expression, expressed by the venom gland.

It localises to the secreted. The sequence is that of U1-lycotoxin-Ls1mm from Lycosa singoriensis (Wolf spider).